Consider the following 151-residue polypeptide: Deoxyuridine 5'-triphosphate nucleotidohydrolase (151 aa).

Residues 70–72, Asn83, 87–89, and Met97 each bind substrate; these read RSG and LID.

The protein belongs to the dUTPase family. Homotrimer. It depends on Mg(2+) as a cofactor.

It catalyses the reaction dUTP + H2O = dUMP + diphosphate + H(+). It participates in pyrimidine metabolism; dUMP biosynthesis; dUMP from dCTP (dUTP route): step 2/2. Its function is as follows. This enzyme is involved in nucleotide metabolism: it produces dUMP, the immediate precursor of thymidine nucleotides and it decreases the intracellular concentration of dUTP so that uracil cannot be incorporated into DNA. This chain is Deoxyuridine 5'-triphosphate nucleotidohydrolase, found in Escherichia fergusonii (strain ATCC 35469 / DSM 13698 / CCUG 18766 / IAM 14443 / JCM 21226 / LMG 7866 / NBRC 102419 / NCTC 12128 / CDC 0568-73).